Consider the following 490-residue polypeptide: Bifunctional protein GlmU (490 aa).

Positions 1–241 (MSSPGDTAVL…SALVAGVNNR (241 aa)) are pyrophosphorylase. UDP-N-acetyl-alpha-D-glucosamine contacts are provided by residues 12–15 (LAAG), Lys-26, Gln-83, 88–89 (GT), 112–114 (SGD), Gly-151, Glu-166, Asn-181, and Asn-239. Asp-114 is a Mg(2+) binding site. Mg(2+) is bound at residue Asn-239. The linker stretch occupies residues 242 to 262 (VQLAQLGAELNRRIVAAHQLA). The tract at residues 263-490 (GVTVVDPATT…AGGRPAGEAE (228 aa)) is N-acetyltransferase. UDP-N-acetyl-alpha-D-glucosamine contacts are provided by Arg-344 and Lys-362. His-374 functions as the Proton acceptor in the catalytic mechanism. Residues Tyr-377 and Asn-388 each contribute to the UDP-N-acetyl-alpha-D-glucosamine site. Residues Ala-391, 397–398 (NY), Ser-416, and Ala-434 each bind acetyl-CoA. The segment at 462–490 (RRKRPGSAAARAAEAAEKAAGGRPAGEAE) is disordered. Over residues 467–490 (GSAAARAAEAAEKAAGGRPAGEAE) the composition is skewed to low complexity.

This sequence in the N-terminal section; belongs to the N-acetylglucosamine-1-phosphate uridyltransferase family. It in the C-terminal section; belongs to the transferase hexapeptide repeat family. In terms of assembly, homotrimer. Requires Mg(2+) as cofactor.

The protein localises to the cytoplasm. The enzyme catalyses alpha-D-glucosamine 1-phosphate + acetyl-CoA = N-acetyl-alpha-D-glucosamine 1-phosphate + CoA + H(+). It carries out the reaction N-acetyl-alpha-D-glucosamine 1-phosphate + UTP + H(+) = UDP-N-acetyl-alpha-D-glucosamine + diphosphate. The protein operates within nucleotide-sugar biosynthesis; UDP-N-acetyl-alpha-D-glucosamine biosynthesis; N-acetyl-alpha-D-glucosamine 1-phosphate from alpha-D-glucosamine 6-phosphate (route II): step 2/2. It participates in nucleotide-sugar biosynthesis; UDP-N-acetyl-alpha-D-glucosamine biosynthesis; UDP-N-acetyl-alpha-D-glucosamine from N-acetyl-alpha-D-glucosamine 1-phosphate: step 1/1. It functions in the pathway bacterial outer membrane biogenesis; LPS lipid A biosynthesis. Functionally, catalyzes the last two sequential reactions in the de novo biosynthetic pathway for UDP-N-acetylglucosamine (UDP-GlcNAc). The C-terminal domain catalyzes the transfer of acetyl group from acetyl coenzyme A to glucosamine-1-phosphate (GlcN-1-P) to produce N-acetylglucosamine-1-phosphate (GlcNAc-1-P), which is converted into UDP-GlcNAc by the transfer of uridine 5-monophosphate (from uridine 5-triphosphate), a reaction catalyzed by the N-terminal domain. In Mycolicibacterium paratuberculosis (strain ATCC BAA-968 / K-10) (Mycobacterium paratuberculosis), this protein is Bifunctional protein GlmU.